We begin with the raw amino-acid sequence, 472 residues long: Argininosuccinate lyase (472 aa).

This sequence belongs to the lyase 1 family. Argininosuccinate lyase subfamily.

The protein localises to the cytoplasm. The catalysed reaction is 2-(N(omega)-L-arginino)succinate = fumarate + L-arginine. It functions in the pathway amino-acid biosynthesis; L-arginine biosynthesis; L-arginine from L-ornithine and carbamoyl phosphate: step 3/3. This chain is Argininosuccinate lyase, found in Mycobacterium avium (strain 104).